The primary structure comprises 658 residues: Transcription factor cep-1 (658 aa).

The DNA-binding element occupies 238-428 (EEWLTFEVKK…RDWKNFCEKR (191 aa)). Zn(2+)-binding residues include Cys-319, His-322, Cys-375, and Cys-379. Positions 450–477 (QSSLHSGPSSPEKVTDTSQMFQSTSSSS) are disordered. The span at 466–476 (TSQMFQSTSSS) shows a compositional bias: low complexity. Residues 535 to 564 (QYGLQRQVKLSEKEYSKFVAFFAKEGENEI) form a required for tertiary structure stability of the protein region.

Belongs to the p53 family. Homodimer. Interacts (via C-terminus domain) with prmt-5; not methylated by prmt-5. Interacts with cbp-1 (via HAT domain); cep-1 transcriptional activity may be inhibited by interaction with methylated cbp-1. Component of a complex that contains prmt-5 and cbp-1. Interacts with ape-1; the interaction inhibits pro-apoptotic activity of cep-1. The cofactor is Zn(2+). Phosphorylated in response to IR-induced DNA damage which is thought to be mediated by akt-1.

It localises to the nucleus. Transcriptional activator that binds the same DNA consensus sequence as p53. Has a role in normal development to ensure proper meiotic chromosome segregation. Promotes apoptosis under conditions of cellular and genotoxic stress in response to DNA damage, hypoxia, or starvation. However, not required for DNA repair in response to UV-C or to regulate cell-cycle progression. Regulates germline apoptosis in response to DNA damage. Required for induction of ced-13 in response to DNA damage. Its pro-apoptotic activity is inhibited when bound to ape-1 in vitro. Regulates germline proliferation by activating phg-1. Regulates DNA damage-induced apoptosis by inducing transcription of the programmed cell death activator egl-1. Negatively regulates lifespan. This chain is Transcription factor cep-1, found in Caenorhabditis briggsae.